We begin with the raw amino-acid sequence, 309 residues long: Pantothenate kinase (309 aa).

92 to 99 (GSVAVGKT) provides a ligand contact to ATP.

The protein belongs to the prokaryotic pantothenate kinase family.

It is found in the cytoplasm. It catalyses the reaction (R)-pantothenate + ATP = (R)-4'-phosphopantothenate + ADP + H(+). Its pathway is cofactor biosynthesis; coenzyme A biosynthesis; CoA from (R)-pantothenate: step 1/5. This is Pantothenate kinase (coaA) from Lactiplantibacillus plantarum (strain ATCC BAA-793 / NCIMB 8826 / WCFS1) (Lactobacillus plantarum).